A 216-amino-acid polypeptide reads, in one-letter code: Peptide deformylase 1 (216 aa).

2 residues coordinate Fe cation: C135 and H177. E178 is an active-site residue. H181 serves as a coordination point for Fe cation.

It belongs to the polypeptide deformylase family. The cofactor is Fe(2+).

The catalysed reaction is N-terminal N-formyl-L-methionyl-[peptide] + H2O = N-terminal L-methionyl-[peptide] + formate. Removes the formyl group from the N-terminal Met of newly synthesized proteins. Requires at least a dipeptide for an efficient rate of reaction. N-terminal L-methionine is a prerequisite for activity but the enzyme has broad specificity at other positions. This chain is Peptide deformylase 1, found in Streptomyces avermitilis (strain ATCC 31267 / DSM 46492 / JCM 5070 / NBRC 14893 / NCIMB 12804 / NRRL 8165 / MA-4680).